A 2241-amino-acid polypeptide reads, in one-letter code: Large tegument protein deneddylase (2241 aa).

A deubiquitination activity region spans residues 1–238 (MKVTQASCHQ…IDLTGVVRES (238 aa)). The region spanning 4–226 (TQASCHQGDI…AARLVSTYRD (223 aa)) is the Peptidase C76 domain. Catalysis depends on residues C24, D160, and H162. Residues 239–314 (ADTAATTTTA…STTSKTLATA (76 aa)) are disordered. Residues 240 to 250 (DTAATTTTAAP) are compositionally biased toward low complexity. The segment covering 251–268 (SLPPLPDPIVDPGCPPGV) has biased composition (pro residues). Residues 304-314 (PSTTSKTLATA) are compositionally biased toward low complexity. The interval 327-331 (SSAVP) is interaction with inner tegument protein. Disordered regions lie at residues 1187 to 1230 (MTET…PPAD) and 2118 to 2152 (PIAR…DTSR). 2 stretches are compositionally biased toward basic and acidic residues: residues 1190–1199 (TSERLDRSLR) and 2142–2152 (QIDHAQDDTSR).

This sequence belongs to the herpesviridae large tegument protein family. As to quaternary structure, interacts with host CUL1 and CUL4A; these interactions inhibit the E3 ligase activity of cullins. Interacts with inner tegument protein. Interacts with capsid vertex specific component CVC2. Interacts with the major capsid protein/MCP.

The protein resides in the virion tegument. Its subcellular location is the host cytoplasm. The protein localises to the host nucleus. The enzyme catalyses Thiol-dependent hydrolysis of ester, thioester, amide, peptide and isopeptide bonds formed by the C-terminal Gly of ubiquitin (a 76-residue protein attached to proteins as an intracellular targeting signal).. Large tegument protein that plays multiple roles in the viral cycle. During viral entry, remains associated with the capsid while most of the tegument is detached and participates in the capsid transport toward the host nucleus. Plays a role in the routing of the capsid at the nuclear pore complex and subsequent uncoating. Within the host nucleus, acts as a deneddylase and promotes the degradation of nuclear CRLs (cullin-RING ubiquitin ligases) and thereby stabilizes nuclear CRL substrates, while cytoplasmic CRLs remain unaffected. These modifications prevent host cell cycle S-phase progression and create a favorable environment allowing efficient viral genome replication. Participates later in the secondary envelopment of capsids. Indeed, plays a linker role for the association of the outer viral tegument to the capsids together with the inner tegument protein. The sequence is that of Large tegument protein deneddylase (UL48) from Homo sapiens (Human).